The chain runs to 285 residues: Polyamine aminopropyltransferase (285 aa).

The 237-residue stretch at 5-241 (DNWYIEHFQP…GWWSVTMASK (237 aa)) folds into the PABS domain. An S-methyl-5'-thioadenosine-binding site is contributed by glutamine 35. The spermidine site is built by histidine 66 and aspartate 90. S-methyl-5'-thioadenosine is bound by residues aspartate 110 and 141–142 (DG). The Proton acceptor role is filled by aspartate 160. A spermidine-binding site is contributed by 160-163 (DSTD). Proline 167 serves as a coordination point for S-methyl-5'-thioadenosine.

The protein belongs to the spermidine/spermine synthase family. Homodimer or homotetramer.

Its subcellular location is the cytoplasm. It catalyses the reaction S-adenosyl 3-(methylsulfanyl)propylamine + putrescine = S-methyl-5'-thioadenosine + spermidine + H(+). It functions in the pathway amine and polyamine biosynthesis; spermidine biosynthesis; spermidine from putrescine: step 1/1. Functionally, catalyzes the irreversible transfer of a propylamine group from the amino donor S-adenosylmethioninamine (decarboxy-AdoMet) to putrescine (1,4-diaminobutane) to yield spermidine. This chain is Polyamine aminopropyltransferase, found in Xanthomonas axonopodis pv. citri (strain 306).